The sequence spans 763 residues: MSELLSFALFLASVLIYAWKAGRNTWWFAATLTVLGLFVVLNITLFASDYFTGDGINDAVLYTLTNSLTGAGVSKYILPGIGIVLGLTAVFGALGWILRRRRHHPHHFGYSLLALLLALGSVDASPAFRQITELVKSQSRDGDPDFAAYYKEPSKTIPDPKLNLVYIYGESLERTYFDNEAFPDLTPELGALKNEGLDFSHTQQLPGTDYTIAGMVASQCGIPLFAPFEGNASASVSSFFPQNICLGDILKNSGYQNYFVQGANLRFAGKDVFLKSHGFDHLYGSEELKSVVADPHYRNDWGFYDDTVLDEAWKKFEELSRSGQRFSLFTLTVDTHHPDGFISRTCNRKKYDFDGKPNQSFSAVSCSQENIAAFINKIKASPWFKDTVIVVSSDHLAMNNTAWKYLNKQDRNNLFFVIRGDKPQQETLAVKRNTMDNGATVLDILGGDNYLGLGRSSLSGQSMSEIFLNIKEKTLAWKPDIIRLWKFPKEMKEFTIDQQKNMIAFSGSHFRLPLLLRVSDKRVEPLPESEYSAPLRFQLADFAPRDNFVWVDRCYKMAQLWAPELALSTDWCVSQGQLGGQQIVQHVDKTMWKGKTAFKDTVIDMARYKSNVDTLKIVDNDIRYKADSFIFNVAGAPEEVKQFSGISRPESWGRWSNAQLGDEVKIEYKHPLPKKFDLVITAKAYGNNASRPIPVRVGNEEQTLVLGNEVTTTTLHFDNPTDADTLVIVPPEPVSTNEGNILGHSPRKLGIGMVEIKVVEREG.

4 consecutive transmembrane segments (helical) span residues 1 to 21 (MSELLSFALFLASVLIYAWKA), 26 to 46 (WWFAATLTVLGLFVVLNITLF), 77 to 97 (ILPGIGIVLGLTAVFGALGWI), and 108 to 128 (FGYSLLALLLALGSVDASPAF).

The protein belongs to the OpgB family.

Its subcellular location is the cell inner membrane. It carries out the reaction a phosphatidylglycerol + a membrane-derived-oligosaccharide D-glucose = a 1,2-diacyl-sn-glycerol + a membrane-derived-oligosaccharide 6-(glycerophospho)-D-glucose.. Its pathway is glycan metabolism; osmoregulated periplasmic glucan (OPG) biosynthesis. Its function is as follows. Transfers a phosphoglycerol residue from phosphatidylglycerol to the membrane-bound nascent glucan backbones. The chain is Phosphoglycerol transferase I from Escherichia coli (strain SE11).